We begin with the raw amino-acid sequence, 502 residues long: Carbon catabolite-derepressing protein kinase (502 aa).

In terms of domain architecture, Protein kinase spans 14–269; the sequence is YYLGKILGVG…IGEIRKHSWF (256 aa). ATP-binding positions include 20-28 and lysine 43; that span reads LGVGTFAKV. Catalysis depends on aspartate 140, which acts as the Proton acceptor. Threonine 173 carries the phosphothreonine; by autocatalysis modification. One can recognise a UBA domain in the interval 290-330; sequence MIDEDTLRDVVKLGYDKDHVCESLCNRLQNEETVAYYLLLD. A KA1 domain is found at 453-501; it reads NSRLPAVIKFEIQLYKTKDDKYLLDMQRVTGPQLLFLEFCAAFLTNLRV.

It belongs to the protein kinase superfamily. CAMK Ser/Thr protein kinase family. SNF1 subfamily.

The catalysed reaction is L-seryl-[protein] + ATP = O-phospho-L-seryl-[protein] + ADP + H(+). It catalyses the reaction L-threonyl-[protein] + ATP = O-phospho-L-threonyl-[protein] + ADP + H(+). Functionally, essential for release from glucose repression. The protein is Carbon catabolite-derepressing protein kinase (RKIN1) of Secale cereale (Rye).